The following is a 901-amino-acid chain: MSGQTLTDRIAAAQYSVTGSAVARAVCKATTHEVMGPKKKHLDYLIQATNETNVNIPQMADTLFERATNSSWVVVFKALVTTHHLMVHGNERFIQYLASRNTLFNLSNFLDKSGSHGYDMSTFIRRYSRYLNEKAFSYRQMAFDFARVKKGADGVMRTMVPEKLLKSMPILQGQIDALLEFDVHPNELTNGVINAAFMLLFKDLIKLFACYNDGVINLLEKFFEMKKGQCKDALEIYKRFLTRMTRVSEFLKVAEQVGIDKGDIPDLTQAPSSLMETLEQHLNTLEGKKPGNNEGSGAPSPLSKSSPATTVTSPNSTPAKTIDTSPPVDIFATASAAAPVSSAKPSSDLLDLQPDFSGAAAGAAAPVVPPSGGATAWGDLLGEDSLAALSSVPCEAPISDPFAPEPSPPTTTTEPASASASTTTAVTAVTTEVDLFGDAFAASPGEAPAASEGATAPATPAPVAAALDACSGNDPFAPSEGSAEAAPELDLFAMKPPETSAPVVTPTASTAPPVPATAPSPAPTAVAATAATTTAAAAATTTATTSAAAATTAAAPPALDIFGDLFDSAPEVAAAPKPDAAPSIDLFGTDAFSSPPRGASPVPESSLTADLLSVDAFAAPSPASTASPAKAESSGVIDLFGDAFGSGASETQPAPQAVSSSSASADLLAGFGGSFMAPSTTPVTPAQNNLLQPSFEAAFGTTPSTSSSSSFDPSVFDGLGDLLMPTMAPSGQPAPVSMVPPSPAMAASKGLGSDLDSSLASLVGNLGISGTTSKKGDLQWNAGEKKLTGGANWQPKVTPATWSAGVPPQGTVPPTSSVPPGAGAPSVGQPGAGFGMPPSGTGMTMMSQQPVMFAQPMMRPPFGAAAVPGTQLSPSPTPATQSPKKPPAKDPLADLNIKDFL.

One can recognise an ENTH domain in the interval 14 to 145 (QYSVTGSAVA…FSYRQMAFDF (132 aa)). Disordered stretches follow at residues 285 to 326 (LEGK…DTSP), 397 to 424 (PISD…STTT), 497 to 522 (PETS…PSPA), and 573 to 606 (AAAP…PESS). Phosphoserine is present on residues Ser-296, Ser-300, and Ser-306. Residues 302 to 324 (LSKSSPATTVTSPNSTPAKTIDT) are compositionally biased toward polar residues. Thr-310 carries an O-linked (GlcNAc) threonine glycan. A Phosphoserine modification is found at Ser-313. Thr-317 carries the phosphothreonine modification. 2 stretches are compositionally biased toward low complexity: residues 410 to 424 (TTTT…STTT) and 500 to 511 (SAPVVTPTASTA). A compositionally biased stretch (pro residues) spans 512–522 (PPVPATAPSPA). 5 positions are modified to phosphoserine: Ser-594, Ser-600, Ser-621, Ser-627, and Ser-761. 2 disordered regions span residues 803 to 845 (SAGV…GMTM) and 857 to 901 (MMRP…KDFL). Residues 835–845 (GMPPSGTGMTM) are compositionally biased toward low complexity. Arg-859 carries the post-translational modification Asymmetric dimethylarginine; alternate. At Arg-859 the chain carries Omega-N-methylarginine; alternate. The span at 870–882 (TQLSPSPTPATQS) shows a compositional bias: polar residues. The segment covering 887-901 (PAKDPLADLNIKDFL) has biased composition (basic and acidic residues).

The protein belongs to the PICALM/SNAP91 family. As to quaternary structure, binds AP2A2. Interacts with AP2B1; clathrin competes with SNAP91. Post-translationally, thr-310 can be modified by the addition of N-acetylglucosamine which can be further phosphorylated. There is no evidence for direct Thr-310 phosphorylation. As to expression, brain. Associated with the synapses.

It is found in the cell membrane. The protein resides in the membrane. The protein localises to the coated pit. In terms of biological role, adaptins are components of the adaptor complexes which link clathrin to receptors in coated vesicles. Clathrin-associated protein complexes are believed to interact with the cytoplasmic tails of membrane proteins, leading to their selection and concentration. Binding of AP180 to clathrin triskelia induces their assembly into 60-70 nm coats. This is Clathrin coat assembly protein AP180 (Snap91) from Mus musculus (Mouse).